The sequence spans 33 residues: Suppressor protein HFN40 (33 aa).

Its function is as follows. Suppresses expansion of husk leaf blades. This chain is Suppressor protein HFN40, found in Zea mays (Maize).